The primary structure comprises 132 residues: Transcription antitermination protein NusB (132 aa).

It belongs to the NusB family.

Functionally, involved in transcription antitermination. Required for transcription of ribosomal RNA (rRNA) genes. Binds specifically to the boxA antiterminator sequence of the ribosomal RNA (rrn) operons. This chain is Transcription antitermination protein NusB, found in Lachnoclostridium phytofermentans (strain ATCC 700394 / DSM 18823 / ISDg) (Clostridium phytofermentans).